The sequence spans 409 residues: N-carbamoyl-L-amino acid amidohydrolase (409 aa).

The a divalent metal cation site is built by His79, Asp90, Glu125, and His189. Gln192, His225, Asn273, Arg286, and Ala355 together coordinate an N-carbamoyl-L-alpha-amino acid. The tract at residues 208 to 325 is involved in dimerization; sequence GIAGLIWVKF…TTERLQEMAP (118 aa). Position 380 (His380) interacts with a divalent metal cation.

The protein belongs to the peptidase M20 family. Homodimer. Mn(2+) is required as a cofactor. It depends on Ni(2+) as a cofactor. Co(2+) serves as cofactor. Requires Fe(2+) as cofactor.

The enzyme catalyses an N-carbamoyl-L-alpha-amino acid + H2O + 2 H(+) = an L-alpha-amino acid + NH4(+) + CO2. It carries out the reaction N-carbamoyl-L-methionine + H2O + 2 H(+) = L-methionine + NH4(+) + CO2. The catalysed reaction is N-acetyl-L-methionine + H2O = L-methionine + acetate. It catalyses the reaction N-carbamoyl-L-alanine + H2O + 2 H(+) = L-alanine + NH4(+) + CO2. The enzyme catalyses N-carbamoyl-L-glutamate + H2O + 2 H(+) = L-glutamate + NH4(+) + CO2. It carries out the reaction N-carbamoylglycine + H2O + 2 H(+) = glycine + NH4(+) + CO2. The catalysed reaction is N-carbamoyl-L-leucine + H2O + 2 H(+) = L-leucine + NH4(+) + CO2. In terms of biological role, catalyzes the hydrolysis of aliphatic N-carbamoyl-L-alpha-amino acids to free L-alpha-amino acids. Is strictly L-specific since it is inactive toward N-carbamoyl-D-alpha-amino acids. Is not able to use aromatic N-carbamoyl-L-alpha-amino acids like N-carbamoyl-L-tryptophan and N-carbamoyl-L-phenylalanine as substrates, but is also able to hydrolyze N-acetyl-L-methionine. This is N-carbamoyl-L-amino acid amidohydrolase from Geobacillus stearothermophilus (Bacillus stearothermophilus).